The sequence spans 235 residues: Dephospho-CoA kinase (235 aa).

The DPCK domain occupies 15–219 (NVGLTGSISC…KKERLQRKSA (205 aa)). 23 to 28 (SCGKST) is an ATP binding site.

It belongs to the CoaE family.

The protein localises to the cytoplasm. The catalysed reaction is 3'-dephospho-CoA + ATP = ADP + CoA + H(+). It participates in cofactor biosynthesis; coenzyme A biosynthesis; CoA from (R)-pantothenate: step 5/5. Catalyzes the phosphorylation of the 3'-hydroxyl group of dephosphocoenzyme A to form coenzyme A. The chain is Dephospho-CoA kinase from Syntrophus aciditrophicus (strain SB).